The sequence spans 887 residues: Kinesin-like protein KIF20A (887 aa).

S2 bears the N-acetylserine mark. Phosphoserine is present on residues S7, S14, and S21. A Kinesin motor domain is found at 63–506 (KVKVYLRIRP…AKFSALASQL (444 aa)). Position 159-166 (159-166 (GVTNSGKT)) interacts with ATP. At S527 the chain carries Phosphoserine; by PLK1. Positions 527–553 (SPQVGPGLEKEDKADSDLEDSPEDEAD) are disordered. A compositionally biased stretch (acidic residues) spans 543 to 553 (DLEDSPEDEAD). Residues 559-804 (KEELLQVVEA…VLVKLDLQKK (246 aa)) adopt a coiled-coil conformation. A phosphoserine mark is found at S683 and S823. The segment at 805-887 (AACIAEQYHT…LLKSPFGKKY (83 aa)) is globular. Positions 826–875 (KRLGANQENQQPNHQPPGKKPFLRNLLPRTPTCQSSTDSSPYARILRSRH) are disordered. Phosphothreonine is present on T855. A compositionally biased stretch (polar residues) spans 856 to 865 (PTCQSSTDSS). S865, S876, and S881 each carry phosphoserine.

It belongs to the TRAFAC class myosin-kinesin ATPase superfamily. Kinesin family. Post-translationally, phosphorylated by PLK1 at Ser-527 during mitosis, creating a docking site for PLK1 and recruiting PLK1 at central spindle. As to expression, ubiquitously expressed, with highest levels in spleen and testis.

It is found in the golgi apparatus. The protein localises to the cytoplasm. It localises to the cytoskeleton. The protein resides in the spindle. In terms of biological role, mitotic kinesin required for chromosome passenger complex (CPC)-mediated cytokinesis. Following phosphorylation by PLK1, involved in recruitment of PLK1 to the central spindle. Interacts with guanosine triphosphate (GTP)-bound forms of RAB6A and RAB6B. May act as a motor required for the retrograde RAB6 regulated transport of Golgi membranes and associated vesicles along microtubules. Has a microtubule plus end-directed motility. The protein is Kinesin-like protein KIF20A (Kif20a) of Mus musculus (Mouse).